The chain runs to 145 residues: uncharacterized protein (145 aa).

The tract at residues 37-123 (GKGTNTAKSS…MDREASYFAP (87 aa)) is disordered. The segment covering 38 to 63 (KGTNTAKSSGGNNGTNLNAKRSNTTQ) has biased composition (polar residues).

This is an uncharacterized protein from Caenorhabditis elegans.